The sequence spans 325 residues: MRAPDFWRKDNAVSRLLAPLGAIYGWAVRRNLERAEEYRPAVPVICVGNIVVGGAGKTPVGIALARRLIAAGVKPHFLTRGYGGTEVGPRAVDLDRHDFARVGDEALLLAREAPTWVSRWRPDGAVAATEMGAEVIIMDDGFQNGSIAKDLSLVVVDGSYGFGNGRTMPAGPCREPPDQGLARADAMVVIGKDRRGLAELARAHGIPLLAARLVPGPEGADLKGRKVVAFAGIGRPEKFFASLKQCGARLTADHSFPDHHPFTRADIEALLAEAEANEALLITTAKDRVRLPADLRARVAVLSVSLDWDAPSLLTPLFDRIGVRA.

51–58 (VVGGAGKT) is an ATP binding site.

The protein belongs to the LpxK family.

It catalyses the reaction a lipid A disaccharide + ATP = a lipid IVA + ADP + H(+). It participates in glycolipid biosynthesis; lipid IV(A) biosynthesis; lipid IV(A) from (3R)-3-hydroxytetradecanoyl-[acyl-carrier-protein] and UDP-N-acetyl-alpha-D-glucosamine: step 6/6. Transfers the gamma-phosphate of ATP to the 4'-position of a tetraacyldisaccharide 1-phosphate intermediate (termed DS-1-P) to form tetraacyldisaccharide 1,4'-bis-phosphate (lipid IVA). The protein is Tetraacyldisaccharide 4'-kinase of Paramagnetospirillum magneticum (strain ATCC 700264 / AMB-1) (Magnetospirillum magneticum).